The following is a 714-amino-acid chain: RB-associated KRAB zinc finger protein (714 aa).

The 72-residue stretch at 8–79 (VSFKDVAVDF…GGEFPCQHSP (72 aa)) folds into the KRAB domain. Residues lysine 97 and lysine 259 each participate in a glycyl lysine isopeptide (Lys-Gly) (interchain with G-Cter in SUMO2) cross-link. The interval 171-260 (TYHGEKMCEF…YQRSQMEMKP (90 aa)) is required for interaction with RB1. 2 consecutive C2H2-type zinc fingers follow at residues 261 to 283 (FECSECGKSFCKKSKFIIHQRAH) and 289 to 311 (YECNVCGKSFSQKGTLTVHRRSH). Residue lysine 315 forms a Glycyl lysine isopeptide (Lys-Gly) (interchain with G-Cter in SUMO2) linkage. C2H2-type zinc fingers lie at residues 317–339 (YKCNECGKTFCQKLHLTQHLRTH), 345–367 (YECSECGKTFCQKTHLTLHQRNH), 373–395 (YPCNECGKSFSRKSALSDHQRTH), 401–423 (YKCNECGKSYYRKSTLITHQRTH), 429–451 (YQCSECGKFFSRVSYLTIHYRSH), 457–479 (YECNECGKTFNLNSAFIRHRKVH), and 485–505 (HECSECGKFSQLYLTDHHTAH). Lysine 357 participates in a covalent cross-link: Glycyl lysine isopeptide (Lys-Gly) (interchain with G-Cter in SUMO2). The interaction with AR stretch occupies residues 417 to 714 (ITHQRTHTGE…NMNVLDVENL (298 aa)). The C2H2-type 10; degenerate zinc finger occupies 511–533 (YECNECGKTFLVNSAFDGHQPLP). Glycyl lysine isopeptide (Lys-Gly) (interchain with G-Cter in SUMO2) cross-links involve residues lysine 534 and lysine 537. C2H2-type zinc fingers lie at residues 539–561 (YECNVCGKLFNELSYYTEHYRSH), 567–589 (YGCSECGKTFSHNSSLFRHQRVH), 595–617 (YECYECGKFFSQKSYLTIHHRIH), 623–645 (YECSKCGKVFSRMSNLTVHYRSH), 651–673 (YECNECGKVFSQKSYLTVHYRTH), and 679–701 (YECNECGKKFHHRSAFNSHQRIH).

The protein belongs to the krueppel C2H2-type zinc-finger protein family. In terms of assembly, interacts with AR and RB1. May also interact with other nuclear hormone receptors such as NR3C1/GR. As to expression, expressed in bone, brain, heart, kidney, liver, lung, pancreas and placenta.

The protein localises to the nucleus. May repress E2F-dependent transcription. May promote AR-dependent transcription. The chain is RB-associated KRAB zinc finger protein (RBAK) from Homo sapiens (Human).